A 273-amino-acid chain; its full sequence is Methylthioribulose-1-phosphate dehydratase (273 aa).

Positions 1–27 (MCPTCPPSAASASSENNNTDNNDHLVL) are disordered. C114 contributes to the substrate binding site. H132 and H134 together coordinate Zn(2+). E168 acts as the Proton donor/acceptor in catalysis. H225 provides a ligand contact to Zn(2+).

This sequence belongs to the aldolase class II family. MtnB subfamily. Zn(2+) is required as a cofactor.

The protein resides in the cytoplasm. It catalyses the reaction 5-(methylsulfanyl)-D-ribulose 1-phosphate = 5-methylsulfanyl-2,3-dioxopentyl phosphate + H2O. It functions in the pathway amino-acid biosynthesis; L-methionine biosynthesis via salvage pathway; L-methionine from S-methyl-5-thio-alpha-D-ribose 1-phosphate: step 2/6. In terms of biological role, catalyzes the dehydration of methylthioribulose-1-phosphate (MTRu-1-P) into 2,3-diketo-5-methylthiopentyl-1-phosphate (DK-MTP-1-P). The polypeptide is Methylthioribulose-1-phosphate dehydratase (Sordaria macrospora (strain ATCC MYA-333 / DSM 997 / K(L3346) / K-hell)).